We begin with the raw amino-acid sequence, 124 residues long: Small ribosomal subunit protein uS13 (124 aa).

Residues 95 to 124 (GLPVRGQRTKTNARTRKGPKRTIAGKKKAR) form a disordered region.

This sequence belongs to the universal ribosomal protein uS13 family. Part of the 30S ribosomal subunit. Forms a loose heterodimer with protein S19. Forms two bridges to the 50S subunit in the 70S ribosome.

Its function is as follows. Located at the top of the head of the 30S subunit, it contacts several helices of the 16S rRNA. In the 70S ribosome it contacts the 23S rRNA (bridge B1a) and protein L5 of the 50S subunit (bridge B1b), connecting the 2 subunits; these bridges are implicated in subunit movement. Contacts the tRNAs in the A and P-sites. The sequence is that of Small ribosomal subunit protein uS13 from Mycobacterium avium (strain 104).